The following is a 1387-amino-acid chain: DNA-directed RNA polymerase subunit beta' (1387 aa).

Positions 70, 72, 85, and 88 each coordinate Zn(2+). Mg(2+) is bound by residues aspartate 461, aspartate 463, and aspartate 465. Residues cysteine 808, cysteine 882, cysteine 889, and cysteine 892 each coordinate Zn(2+). A disordered region spans residues 1367–1387 (QDEAKGVGQETPRLSGQEAAE).

Belongs to the RNA polymerase beta' chain family. As to quaternary structure, the RNAP catalytic core consists of 2 alpha, 1 beta, 1 beta' and 1 omega subunit. When a sigma factor is associated with the core the holoenzyme is formed, which can initiate transcription. Requires Mg(2+) as cofactor. The cofactor is Zn(2+).

It catalyses the reaction RNA(n) + a ribonucleoside 5'-triphosphate = RNA(n+1) + diphosphate. Functionally, DNA-dependent RNA polymerase catalyzes the transcription of DNA into RNA using the four ribonucleoside triphosphates as substrates. The chain is DNA-directed RNA polymerase subunit beta' from Granulibacter bethesdensis (strain ATCC BAA-1260 / CGDNIH1).